We begin with the raw amino-acid sequence, 192 residues long: Ion-translocating oxidoreductase complex subunit B (192 aa).

The tract at residues Met1–Ser26 is hydrophobic. The 60-residue stretch at Glu32 to Val91 folds into the 4Fe-4S domain. The [4Fe-4S] cluster site is built by Cys49, Cys52, Cys57, Cys74, Cys117, Cys120, Cys123, Cys127, Cys147, Cys150, Cys153, and Cys157. 2 4Fe-4S ferredoxin-type domains span residues Met108–Arg137 and Ala138–Val167.

It belongs to the 4Fe4S bacterial-type ferredoxin family. RnfB subfamily. In terms of assembly, the complex is composed of six subunits: RsxA, RsxB, RsxC, RsxD, RsxE and RsxG. Requires [4Fe-4S] cluster as cofactor.

The protein resides in the cell inner membrane. Part of a membrane-bound complex that couples electron transfer with translocation of ions across the membrane. Required to maintain the reduced state of SoxR. The sequence is that of Ion-translocating oxidoreductase complex subunit B from Salmonella newport (strain SL254).